We begin with the raw amino-acid sequence, 101 residues long: MFVKKGDKVRVIAGKDKGTEAVVLKALPKVNKVVVEGVGMIKKHQKPNAENPQGAIVEKEAPIHVSNVQVLDKNGVAGRVGYKVVDGKKVRYSKKSGEVLD.

The protein belongs to the universal ribosomal protein uL24 family. In terms of assembly, part of the 50S ribosomal subunit.

One of two assembly initiator proteins, it binds directly to the 5'-end of the 23S rRNA, where it nucleates assembly of the 50S subunit. Functionally, one of the proteins that surrounds the polypeptide exit tunnel on the outside of the subunit. This chain is Large ribosomal subunit protein uL24, found in Streptococcus uberis (strain ATCC BAA-854 / 0140J).